The sequence spans 250 residues: UDP-2,3-diacylglucosamine hydrolase (250 aa).

Mn(2+) contacts are provided by D8, H10, D41, N79, and H114. 79 to 80 (NR) provides a ligand contact to substrate. Positions 122, 160, 167, and 195 each coordinate substrate. 2 residues coordinate Mn(2+): H195 and H197.

Belongs to the LpxH family. Mn(2+) serves as cofactor.

The protein localises to the cell inner membrane. The enzyme catalyses UDP-2-N,3-O-bis[(3R)-3-hydroxytetradecanoyl]-alpha-D-glucosamine + H2O = 2-N,3-O-bis[(3R)-3-hydroxytetradecanoyl]-alpha-D-glucosaminyl 1-phosphate + UMP + 2 H(+). It participates in glycolipid biosynthesis; lipid IV(A) biosynthesis; lipid IV(A) from (3R)-3-hydroxytetradecanoyl-[acyl-carrier-protein] and UDP-N-acetyl-alpha-D-glucosamine: step 4/6. Functionally, hydrolyzes the pyrophosphate bond of UDP-2,3-diacylglucosamine to yield 2,3-diacylglucosamine 1-phosphate (lipid X) and UMP by catalyzing the attack of water at the alpha-P atom. Involved in the biosynthesis of lipid A, a phosphorylated glycolipid that anchors the lipopolysaccharide to the outer membrane of the cell. The sequence is that of UDP-2,3-diacylglucosamine hydrolase from Nitrosococcus oceani (strain ATCC 19707 / BCRC 17464 / JCM 30415 / NCIMB 11848 / C-107).